Here is an 83-residue protein sequence, read N- to C-terminus: MSSGGLLLLLGLLTLWAELTPVSSKDHPEFCELPADSGPCRGILHAFYYHPVHRTCLEFIYGGCYGNANNFKTIDECEPPCAA.

The first 24 residues, 1–24, serve as a signal peptide directing secretion; sequence MSSGGLLLLLGLLTLWAELTPVSS. Residues 31–81 enclose the BPTI/Kunitz inhibitor domain; that stretch reads CELPADSGPCRGILHAFYYHPVHRTCLEFIYGGCYGNANNFKTIDECEPPC. 3 disulfides stabilise this stretch: Cys-31–Cys-81, Cys-40–Cys-64, and Cys-56–Cys-77.

Belongs to the venom Kunitz-type family. As to expression, expressed by the venom gland.

It localises to the secreted. Serine protease inhibitor. The sequence is that of Kunitz-type serine protease inhibitor tigerin-2 from Notechis scutatus scutatus (Mainland tiger snake).